We begin with the raw amino-acid sequence, 453 residues long: 3-phosphoshikimate 1-carboxyvinyltransferase (453 aa).

Residues 1–25 (MSHDSEPQPVTAHPAGPLTGALKPP) form a disordered region. Residues lysine 28, serine 29, and arginine 33 each coordinate 3-phosphoshikimate. A phosphoenolpyruvate-binding site is contributed by lysine 28. Residues glycine 101 and arginine 129 each coordinate phosphoenolpyruvate. 3-phosphoshikimate is bound by residues serine 175, glutamine 177, aspartate 330, and lysine 357. Glutamine 177 lines the phosphoenolpyruvate pocket. Aspartate 330 acts as the Proton acceptor in catalysis. Residues arginine 361 and arginine 405 each coordinate phosphoenolpyruvate.

It belongs to the EPSP synthase family. In terms of assembly, monomer.

It localises to the cytoplasm. It catalyses the reaction 3-phosphoshikimate + phosphoenolpyruvate = 5-O-(1-carboxyvinyl)-3-phosphoshikimate + phosphate. It functions in the pathway metabolic intermediate biosynthesis; chorismate biosynthesis; chorismate from D-erythrose 4-phosphate and phosphoenolpyruvate: step 6/7. Functionally, catalyzes the transfer of the enolpyruvyl moiety of phosphoenolpyruvate (PEP) to the 5-hydroxyl of shikimate-3-phosphate (S3P) to produce enolpyruvyl shikimate-3-phosphate and inorganic phosphate. This is 3-phosphoshikimate 1-carboxyvinyltransferase from Methylorubrum populi (strain ATCC BAA-705 / NCIMB 13946 / BJ001) (Methylobacterium populi).